Here is a 198-residue protein sequence, read N- to C-terminus: NAD(P)H dehydrogenase (quinone) (198 aa).

The Flavodoxin-like domain maps to 4–189 (ILVLYYSMYG…SIARYQGEYV (186 aa)). FMN contacts are provided by residues 10–15 (SMYGHI) and 78–80 (TRF). Position 12 (Tyr-12) interacts with NAD(+). Trp-98 lines the substrate pocket. Residues 113–118 (STGTGG) and His-133 contribute to the FMN site.

Belongs to the WrbA family. FMN serves as cofactor.

It carries out the reaction a quinone + NADH + H(+) = a quinol + NAD(+). The catalysed reaction is a quinone + NADPH + H(+) = a quinol + NADP(+). The chain is NAD(P)H dehydrogenase (quinone) from Salmonella paratyphi B (strain ATCC BAA-1250 / SPB7).